Consider the following 256-residue polypeptide: Photosystem I chlorophyll a/b-binding protein 5, chloroplastic (256 aa).

The N-terminal 32 residues, 1–32, are a transit peptide targeting the chloroplast; the sequence is MAVVLRGGITGGFLHHRRDASSVITRRISSVK. Alanine 33 carries the N-acetylalanine modification. Tryptophan 49 contacts chlorophyll b. Positions 69 and 88 each coordinate chlorophyll a. Residue arginine 93 coordinates chlorophyll b. Transmembrane regions (helical) follow at residues 94–113 and 129–146; these read FAML…TTGI and FAST…MGFA. Residues glutamate 147 and arginine 150 each contribute to the chlorophyll b site. Lysine 205, glutamate 206, asparagine 209, arginine 211, glutamine 223, and histidine 238 together coordinate chlorophyll a. A helical transmembrane segment spans residues 212–232; the sequence is LAMMAMLGFFVQASVTHTGPI.

It belongs to the light-harvesting chlorophyll a/b-binding (LHC) protein family. As to quaternary structure, the LHC complex consists of chlorophyll a-b binding proteins. Homodimer. Heterodimer with LHCA2 and, possibly, LHCA3. Can substitute to LHCA4 to form a complex with LHCA1. Binds pigments. Element of the NAD(P)H dehydrogenase-photosystem I supercomplex (NDH-PSI). The cofactor is Binds at least 14 chlorophylls (8 Chl-a and 6 Chl-b) and carotenoids such as lutein and neoxanthin.. Post-translationally, photoregulated by reversible phosphorylation of its threonine residues.

The protein localises to the plastid. The protein resides in the chloroplast thylakoid membrane. In terms of biological role, the light-harvesting complex (LHC) functions as a light receptor, it captures and delivers excitation energy to photosystems with which it is closely associated. Seems involved in the function of the photosystem I in low light conditions, when other LHCA proteins are less abundant. Required, together with LHCA6, for the formation of a full-size NAD(P)H dehydrogenase-photosystem I supercomplex (NDH-PSI) that triggers cyclic and chlororespiratory electron transport in chloroplast thylakoids, especially under stress conditions (e.g. increased light intensity). This chain is Photosystem I chlorophyll a/b-binding protein 5, chloroplastic, found in Arabidopsis thaliana (Mouse-ear cress).